The chain runs to 140 residues: Pre-mRNA-splicing factor NTC20 (140 aa).

Serine 139 is modified (phosphoserine).

In terms of assembly, belongs to the NTC complex (or PRP19-associated complex), composed of at least CEF1, CLF1, ISY1, NTC20, SNT309, SYF1, SYF2, and PRP19. The NTC complex associates with the spliceosome after the release of the U1 and U4 snRNAs and forms the CWC spliceosome subcomplex (or CEF1-associated complex) reminiscent of a late-stage spliceosome composed also of the U2, U5 and U6 snRNAs and at least BUD13, BRR2, CDC40, CUS1, CWC2, CWC15, CWC21, CWC22, CWC23, CWC24, CWC25, CWC27, ECM2, HSH155, IST3, LEA1, MSL1, PRP8, PRP9, PRP11, PRP21, PRP22, PRP45, PRP46, SLU7, SMB1, SMD1, SMD2, SMD3, SMX2, SMX3, SNU114, SPP2, RSE1 and YJU2. Interacts with CEF1, CLF1, ISY1, PRP46, and SYF1.

It is found in the nucleus. In terms of biological role, involved in pre-mRNA splicing. As a component of the NTC complex, associates to the spliceosome to mediate conformational rearrangement or to stabilize the structure of the spliceosome after U4 snRNA dissociation, which leads to spliceosome maturation. The polypeptide is Pre-mRNA-splicing factor NTC20 (NTC20) (Saccharomyces cerevisiae (strain ATCC 204508 / S288c) (Baker's yeast)).